Consider the following 941-residue polypeptide: ATP-dependent 6-phosphofructokinase subunit beta (941 aa).

The N-terminal catalytic PFK domain 1 stretch occupies residues 2 to 558 (PDASLFNGTS…HMKNFISTNS (557 aa)). ATP-binding positions include G191, 255–256 (RC), and 285–288 (GDGS). A Mg(2+)-binding site is contributed by D286. Beta-D-fructose 6-phosphate is bound by residues 331–333 (SID), R368, and 375–377 (MGR). D333 (proton acceptor) is an active-site residue. ATP contacts are provided by residues I395, 400 to 405 (KPASSR), and Q410. Residues E432, R460, and 466–469 (HVQR) contribute to the beta-D-fructose 6-phosphate site. 557–558 (NS) is an ATP binding site. The segment at 559–572 (ADHVPPSLPLEKRK) is interdomain linker. The interval 573–941 (KIAIINVGAP…SDMLSGRTSL (369 aa)) is C-terminal regulatory PFK domain 2. Residues R643, 701–705 (TISNN), R739, 746–748 (QGG), E806, K832, 838–841 (HVQQ), and R918 contribute to the beta-D-fructose 2,6-bisphosphate site.

The protein belongs to the phosphofructokinase type A (PFKA) family. ATP-dependent PFK group I subfamily. Eukaryotic two domain clade 'E' sub-subfamily. As to quaternary structure, heterododecamer of 4 alpha, 4 beta and 4 gamma chains. Mg(2+) serves as cofactor.

The protein resides in the cytoplasm. The catalysed reaction is beta-D-fructose 6-phosphate + ATP = beta-D-fructose 1,6-bisphosphate + ADP + H(+). It participates in carbohydrate degradation; glycolysis; D-glyceraldehyde 3-phosphate and glycerone phosphate from D-glucose: step 3/4. Its activity is regulated as follows. Allosterically activated by ADP, AMP, or fructose 2,6-bisphosphate, and allosterically inhibited by ATP or citrate. In terms of biological role, catalyzes the phosphorylation of D-fructose 6-phosphate to fructose 1,6-bisphosphate by ATP, the first committing step of glycolysis. This chain is ATP-dependent 6-phosphofructokinase subunit beta (PFK2), found in Komagataella pastoris (Yeast).